The sequence spans 63 residues: Keratin-associated protein 19-7 (63 aa).

Belongs to the KRTAP type 19 family. As to quaternary structure, interacts with hair keratins.

Functionally, in the hair cortex, hair keratin intermediate filaments are embedded in an interfilamentous matrix, consisting of hair keratin-associated proteins (KRTAP), which are essential for the formation of a rigid and resistant hair shaft through their extensive disulfide bond cross-linking with abundant cysteine residues of hair keratins. The matrix proteins include the high-sulfur and high-glycine-tyrosine keratins. The polypeptide is Keratin-associated protein 19-7 (KRTAP19-7) (Homo sapiens (Human)).